The chain runs to 232 residues: Large ribosomal subunit protein uL1 (232 aa).

The protein belongs to the universal ribosomal protein uL1 family. In terms of assembly, part of the 50S ribosomal subunit.

In terms of biological role, binds directly to 23S rRNA. The L1 stalk is quite mobile in the ribosome, and is involved in E site tRNA release. Functionally, protein L1 is also a translational repressor protein, it controls the translation of the L11 operon by binding to its mRNA. The polypeptide is Large ribosomal subunit protein uL1 (Bacteroides thetaiotaomicron (strain ATCC 29148 / DSM 2079 / JCM 5827 / CCUG 10774 / NCTC 10582 / VPI-5482 / E50)).